The sequence spans 630 residues: Probable potassium transport system protein Kup (630 aa).

A run of 12 helical transmembrane segments spans residues 19 to 39 (GLIG…LYAV), 59 to 79 (LLSL…VLLI), 108 to 128 (WIIG…ATIT), 145 to 165 (PGLK…LFFV), 173 to 193 (VGGA…ALGL), 220 to 240 (LLAF…EALY), 255 to 275 (WLFF…ALVI), 284 to 304 (PFFF…ATIA), 345 to 365 (IYVP…VLGF), 374 to 394 (AYGI…AFVY), 405 to 425 (TVLV…SNVL), and 427 to 447 (VFDG…VMTT).

This sequence belongs to the HAK/KUP transporter (TC 2.A.72) family.

Its subcellular location is the cell inner membrane. It catalyses the reaction K(+)(in) + H(+)(in) = K(+)(out) + H(+)(out). Transport of potassium into the cell. Likely operates as a K(+):H(+) symporter. The protein is Probable potassium transport system protein Kup of Acidiphilium cryptum (strain JF-5).